Reading from the N-terminus, the 111-residue chain is MSYPVTSQPQSASTCYQTQLSDWHTGLTDCCNDMPVCLCGTFAPLCLACRISDDFGECCCTPYLPGGLHSLRTGMRERYRIQGSIGKDWAALTFCLPCALCQMARELKIRE.

Belongs to the cornifelin family. Directly or indirectly cross-linked to CE proteins loricin and involucrin (IVL).

It is found in the cytoplasm. Functionally, part of the insoluble cornified cell envelope (CE) of stratified squamous epithelia. The polypeptide is Cornifelin (CNFN) (Bos taurus (Bovine)).